Reading from the N-terminus, the 130-residue chain is MAKQIRKTNKKVKMTKLPKGVVHIQSTFNNTIVTITNLKGEVISWSSAGAVGFKGARKSTPFAAKTAAQTAARQSMDQGLKQAKVLVKGAGPGRETAIRGLIDSGLQITLIRDITAIPHNGCRPPKKRRV.

This sequence belongs to the universal ribosomal protein uS11 family. As to quaternary structure, part of the 30S ribosomal subunit.

It is found in the plastid. It localises to the chloroplast. The chain is Small ribosomal subunit protein uS11c from Tupiella akineta (Green alga).